Here is a 682-residue protein sequence, read N- to C-terminus: Potassium-transporting ATPase ATP-binding subunit (682 aa).

A run of 4 helical transmembrane segments spans residues 34-54 (PVMF…IAMA), 62-82 (ALFS…ANFA), 219-239 (IALT…TATL), and 254-274 (VLVA…LSAI). D307 (4-aspartylphosphate intermediate) is an active-site residue. Residues D344, E348, 377–384 (FTAQSRMS), and K395 each bind ATP. Mg(2+) is bound by residues D518 and D522. Transmembrane regions (helical) follow at residues 588 to 608 (FAII…LNIM), 616 to 636 (AILS…PLAL), and 662 to 682 (LLVP…CGLV).

Belongs to the cation transport ATPase (P-type) (TC 3.A.3) family. Type IA subfamily. In terms of assembly, the system is composed of three essential subunits: KdpA, KdpB and KdpC.

The protein resides in the cell inner membrane. It carries out the reaction K(+)(out) + ATP + H2O = K(+)(in) + ADP + phosphate + H(+). Its function is as follows. Part of the high-affinity ATP-driven potassium transport (or Kdp) system, which catalyzes the hydrolysis of ATP coupled with the electrogenic transport of potassium into the cytoplasm. This subunit is responsible for energy coupling to the transport system and for the release of the potassium ions to the cytoplasm. The chain is Potassium-transporting ATPase ATP-binding subunit from Escherichia coli O81 (strain ED1a).